We begin with the raw amino-acid sequence, 449 residues long: Monoacylglycerol lipase (449 aa).

Residue Lys82 forms a Glycyl lysine isopeptide (Lys-Gly) (interchain with G-Cter in ubiquitin) linkage. The region spanning 151–392 (PMLIILHGLT…LLLETSTGGH (242 aa)) is the AB hydrolase-1 domain. The GXSXG motif lies at 230 to 234 (GFSLG). Residue Ser232 is the Nucleophile of the active site. Residues Asp364 and His392 each act as charge relay system in the active site.

It belongs to the AB hydrolase superfamily. AB hydrolase 4 family.

It catalyses the reaction Hydrolyzes glycerol monoesters of long-chain fatty acids.. It carries out the reaction 1-hexadecanoylglycerol + H2O = glycerol + hexadecanoate + H(+). The catalysed reaction is 1-octadecanoylglycerol + H2O = octadecanoate + glycerol + H(+). The enzyme catalyses 1-(9Z-octadecenoyl)-glycerol + H2O = glycerol + (9Z)-octadecenoate + H(+). In terms of biological role, converts monoacylglycerides (MAG) to free fatty acids and glycerol. Has a preference for palmitoyl-MAG. Does not play a significant role in ethyl ester biosynthesis. Also possesses ester hydrolase and low but persistent TAG lipase activity. This Saccharomyces cerevisiae (strain ATCC 204508 / S288c) (Baker's yeast) protein is Monoacylglycerol lipase.